The primary structure comprises 175 residues: Calcineurin subunit B (175 aa).

EF-hand domains follow at residues 21-56 (DEIERLRKRFMKLDRDSSGSIDKNEFMSIPGVSANP), 60-88 (RIMEVFDADNSGDVDFQEFITGLSIFSGR), 90-125 (SKDEKLKFAFKIYDIDKDGLISNGELFIVLKIMVGS), and 131-166 (QLQQIVDRTIMENDLDGDGQLSFEEFKSAIETTEVA). The Ca(2+) site is built by Asp34, Asp36, Ser38, Ser40, Glu45, Asp66, Asp68, Ser70, Asp72, Glu77, Asp103, Asp105, Asp107, Glu114, Asp144, Asp146, Asp148, Gln150, and Glu155.

Belongs to the calcineurin regulatory subunit family. As to quaternary structure, composed of a catalytic subunit (A) and a regulatory subunit (B).

Regulatory subunit of calcineurin, a calcium-dependent, calmodulin stimulated protein phosphatase. Confers calcium sensitivity. This Candida glabrata (strain ATCC 2001 / BCRC 20586 / JCM 3761 / NBRC 0622 / NRRL Y-65 / CBS 138) (Yeast) protein is Calcineurin subunit B (CNB1).